Consider the following 344-residue polypeptide: MMNSTNKLSVIIPLYNAGDDFRTCMESLITQTWTALEIIIINDGSTDNSVEIAKYYAENYPHVRLLHQANAGASVARNRGIEVATGKYVAFVDADDEVYPTMYETLMTMALEDDLDVAQCNADWCFRETGETWQSIPTDRLRSTGVLTGPDWLRMGLSSRRWTHVVWMGVYRRDVIVKNNIKFIAGLHHQDIVWTTEFMFNALRARYTEQSLYKYYLHNTSVSRLHRQGNKNLNYQRHYIKITRLLEKLNRNYADKIMIYPEFHQQITYEALRVCHAVRKEPDILTRQRMIAEIFTSGMYKRLITNVRSVKVGYQALLWSFRLWQWRDKTRSHHRITRSAFNLR.

The protein belongs to the glycosyltransferase 2 family.

This is an uncharacterized protein from Escherichia coli (strain K12).